A 115-amino-acid polypeptide reads, in one-letter code: Protein translation factor SUI1 homolog (115 aa).

This sequence belongs to the SUI1 family.

Functionally, probably involved in translation. This chain is Protein translation factor SUI1 homolog, found in Sporobolus stapfianus (Ressurection grass).